A 641-amino-acid chain; its full sequence is MEKSPEHCAEGSPSPATESAPSATEPPLPSTEPPLPSTEPPLPSTEPPLPPLPPDFEKYWKSVQAYPEDFNTWTYLLQYVEQENHLFAARKAFDAFLAHYPYCYGYWKKYADLEKKNNNILEADEVYRRGIQAITLSVDLWMHYLNFLKETLDPADPETSLTLRGTFEHAVVSAGLDFRSDKLWEMYINWETEQGNLSGVTSIYSRLLGIPTQFYSLHFQRFKEHIQGHLPREFLTSEKFIELRKELASMTLHGGTNDDIPSGLEEIKDPAKRTTEVENMRHRIIEVHQEIFNLNEHEVSKIWNFEEEIKRPYFHVKPLEKAQLNNWKEYLEFELENGSNERIVILFERCVIACACYEEFWIKYAKYMENHSVEGVRHVYNRACHVHLAKKPMVHLLWAAFEEQQGNLEEARRILKNIETAIEGLAMVRLRRVNLERRHGNVKEAEHLLEEAMNKTKTSSESSFYAIKLARHLFKVQANVVKARKVLSNAIQKDKENTKLYLNLLEMEYNCDIKQNEENILAAFDKAIKSPMSIAMRVKFSQRKVEFLEDFGSDVNKLLDTYNEHQKLLKHQDIVKRKAENGLEQPEAKRLHAEEVSTAASVPVTTASMDATQSGYNYGSWYQYNYPANWNFGQYYNTPST.

Residues 1-50 (MEKSPEHCAEGSPSPATESAPSATEPPLPSTEPPLPSTEPPLPSTEPPLP) form a disordered region. The segment covering 10 to 23 (EGSPSPATESAPSA) has biased composition (low complexity). Residues 24–50 (TEPPLPSTEPPLPSTEPPLPSTEPPLP) are compositionally biased toward pro residues. 7 HAT repeats span residues 50 to 82 (PPLPPDFEKYWKSVQAYPEDFNTWTYLLQYVEQ), 84 to 116 (NHLFAARKAFDAFLAHYPYCYGYWKKYADLEKK), 118 to 150 (NNILEADEVYRRGIQAITLSVDLWMHYLNFLKE), 158 to 193 (ETSLTLRGTFEHAVVSAGLDFRSDKLWEMYINWETE), 304 to 336 (NFEEEIKRPYFHVKPLEKAQLNNWKEYLEFELE), 338 to 370 (GSNERIVILFERCVIACACYEEFWIKYAKYMEN), and 372 to 407 (SVEGVRHVYNRACHVHLAKKPMVHLLWAAFEEQQGN).

The protein belongs to the PRP39 family.

The protein resides in the nucleus. Its function is as follows. Involved in pre-mRNA splicing. This Xenopus laevis (African clawed frog) protein is Pre-mRNA-processing factor 39 (prpf39).